We begin with the raw amino-acid sequence, 559 residues long: Putative protease Do-like 3, mitochondrial (559 aa).

A mitochondrion-targeting transit peptide spans M1–F48. The disordered stretch occupies residues E59 to A81. The tract at residues V100 to E292 is serine protease. Residues H138, D169, and S247 each act as charge relay system in the active site. Positions N300–E380 constitute a PDZ domain. The disordered stretch occupies residues S538–H559. Basic residues predominate over residues Q546–H559.

The protein belongs to the peptidase S1C family.

It localises to the mitochondrion matrix. Putative serine protease. This is Putative protease Do-like 3, mitochondrial (DEGP3) from Arabidopsis thaliana (Mouse-ear cress).